The chain runs to 420 residues: Protein translocase subunit SecY (420 aa).

The next 10 helical transmembrane spans lie at 9–29 (ILIT…PIPG), 61–81 (LSII…MELL), 104–124 (IVRY…SVGL), 141–161 (VFMI…MWIG), 173–193 (ISLI…SGTF), 203–223 (ILML…IIYV), 257–277 (LSGV…STIL), 300–320 (YNIL…SIVF), 355–375 (KLTL…WILV), and 377–397 (AMGV…QVAI).

This sequence belongs to the SecY/SEC61-alpha family. In terms of assembly, component of the Sec protein translocase complex. Heterotrimer consisting of SecY, SecE and SecG subunits. The heterotrimers can form oligomers, although 1 heterotrimer is thought to be able to translocate proteins. Interacts with the ribosome. Interacts with SecDF, and other proteins may be involved. Interacts with SecA.

The protein resides in the cell inner membrane. Functionally, the central subunit of the protein translocation channel SecYEG. Consists of two halves formed by TMs 1-5 and 6-10. These two domains form a lateral gate at the front which open onto the bilayer between TMs 2 and 7, and are clamped together by SecE at the back. The channel is closed by both a pore ring composed of hydrophobic SecY resides and a short helix (helix 2A) on the extracellular side of the membrane which forms a plug. The plug probably moves laterally to allow the channel to open. The ring and the pore may move independently. The protein is Protein translocase subunit SecY of Helicobacter pylori (strain J99 / ATCC 700824) (Campylobacter pylori J99).